Consider the following 604-residue polypeptide: MNIVENSIFLSNLMKSANTFELKYDLSCELYRMSTYSTFPAGVPVSERSLARAGFYYTGVNDKVKCFCCGLMLDNWKRGDSPTEKHKKLYPSCRFVQSLNSVNNLEATSQPTFPSSVTNSTHSLLPGTENSGYFRGSYSNSPSNPVNSRANQDFSALMRSSYHCAMNNENARLLTFQTWPLTFLSPTDLAKAGFYYIGPGDRVACFACGGKLSNWEPKDNAMSEHLRHFPKCPFIENQLQDTSRYTVSNLSMQTHAARFKTFFNWPSSVLVNPEQLASAGFYYVGNSDDVKCFCCDGGLRCWESGDDPWVQHAKWFPRCEYLIRIKGQEFIRQVQASYPHLLEQLLSTSDSPGDENAESSIIHFEPGEDHSEDAIMMNTPVINAAVEMGFSRSLVKQTVQRKILATGENYRLVNDLVLDLLNAEDEIREEERERATEEKESNDLLLIRKNRMALFQHLTCVIPILDSLLTAGIINEQEHDVIKQKTQTSLQARELIDTILVKGNIAATVFRNSLQEAEAVLYEHLFVQQDIKYIPTEDVSDLPVEEQLRRLQEERTCKVCMDKEVSIVFIPCGHLVVCKDCAPSLRKCPICRSTIKGTVRTFLS.

BIR repeat units follow at residues 29-96 (ELYR…CRFV), 169-235 (ENAR…CPFI), and 255-322 (HAAR…CEYL). Positions 292, 295, 312, and 319 each coordinate Zn(2+). The CARD domain maps to 439 to 529 (KESNDLLLIR…VLYEHLFVQQ (91 aa)). The RING-type zinc finger occupies 557–592 (CKVCMDKEVSIVFIPCGHLVVCKDCAPSLRKCPICR).

Belongs to the IAP family. Interacts with PRSS25; interaction inhibits apoptotic suppressor activity. The BIR motifs region interacts with TNF receptor associated factors 1 and 2 (TRAF1 and TRAF2) to form a heteromeric complex, which is then recruited to the tumor necrosis factor receptor 2 (TNFR2). Interaction with TRAF2 is required for ubiquitination of IKBKE, degradation of NFKBIA and activation of NF-kappa-B. Interacts with RIP1, RIP2, RIP3, RIP4 and USP19. In terms of processing, auto-ubiquitinated and degraded by the proteasome in apoptotic cells. As to expression, highly expressed in fetal lung, and kidney. In the adult, expression is mainly seen in lymphoid tissues, including spleen, thymus and peripheral blood lymphocytes.

Its subcellular location is the cytoplasm. The protein localises to the nucleus. It catalyses the reaction S-ubiquitinyl-[E2 ubiquitin-conjugating enzyme]-L-cysteine + [acceptor protein]-L-lysine = [E2 ubiquitin-conjugating enzyme]-L-cysteine + N(6)-ubiquitinyl-[acceptor protein]-L-lysine.. With respect to regulation, USP19 regulates the stability of BIRC3/c-IAP2 by preventing its ubiquitination. In terms of biological role, multi-functional protein which regulates not only caspases and apoptosis, but also modulates inflammatory signaling and immunity, mitogenic kinase signaling and cell proliferation, as well as cell invasion and metastasis. Acts as an E3 ubiquitin-protein ligase regulating NF-kappa-B signaling and regulates both canonical and non-canonical NF-kappa-B signaling by acting in opposite directions: acts as a positive regulator of the canonical pathway and suppresses constitutive activation of non-canonical NF-kappa-B signaling. The target proteins for its E3 ubiquitin-protein ligase activity include: RIPK1, RIPK2, RIPK3, RIPK4, CASP3, CASP7, CASP8, IKBKE, TRAF1, and BCL10. Acts as an important regulator of innate immune signaling via regulation of Toll-like receptors (TLRs), Nodlike receptors (NLRs) and RIG-I like receptors (RLRs), collectively referred to as pattern recognition receptors (PRRs). Protects cells from spontaneous formation of the ripoptosome, a large multi-protein complex that has the capability to kill cancer cells in a caspase-dependent and caspase-independent manner. Suppresses ripoptosome formation by ubiquitinating RIPK1 and CASP8. The polypeptide is Baculoviral IAP repeat-containing protein 3 (BIRC3) (Homo sapiens (Human)).